Here is a 231-residue protein sequence, read N- to C-terminus: 5'-methylthioadenosine/S-adenosylhomocysteine nucleosidase (231 aa).

Catalysis depends on E13, which acts as the Proton acceptor. Substrate contacts are provided by residues G79, M154, and 175–176 (ME). D199 (proton donor) is an active-site residue.

It belongs to the PNP/UDP phosphorylase family. MtnN subfamily.

It catalyses the reaction S-adenosyl-L-homocysteine + H2O = S-(5-deoxy-D-ribos-5-yl)-L-homocysteine + adenine. The enzyme catalyses S-methyl-5'-thioadenosine + H2O = 5-(methylsulfanyl)-D-ribose + adenine. The catalysed reaction is 5'-deoxyadenosine + H2O = 5-deoxy-D-ribose + adenine. It functions in the pathway amino-acid biosynthesis; L-methionine biosynthesis via salvage pathway; S-methyl-5-thio-alpha-D-ribose 1-phosphate from S-methyl-5'-thioadenosine (hydrolase route): step 1/2. Catalyzes the irreversible cleavage of the glycosidic bond in both 5'-methylthioadenosine (MTA) and S-adenosylhomocysteine (SAH/AdoHcy) to adenine and the corresponding thioribose, 5'-methylthioribose and S-ribosylhomocysteine, respectively. Also cleaves 5'-deoxyadenosine, a toxic by-product of radical S-adenosylmethionine (SAM) enzymes, into 5-deoxyribose and adenine. In Marinomonas sp. (strain MWYL1), this protein is 5'-methylthioadenosine/S-adenosylhomocysteine nucleosidase.